Reading from the N-terminus, the 268-residue chain is MADEINEIREEQEQLAPFDPSKKKKKKKVVIQEPVEDLAESSQTEKSDSLPVNDGLESSFTGMKKKKKKPTESSLLNNESVDAGEDLDEIANDEQEGEEGIVLQQRYPWEGSERDYIYDELLGRVFNILRENNPELAGDRRRTVMRPPQVLREGTKKTVFVNFMDLCKTMHRQPDHVMQYLLAELGTSGSLDGQQRLVVKGRFAPKNFEGILRRYITDYVICLGCKSPDTILSKENRLFFLRCEKCGSQRSVAPIKTGFVARVSRRKT.

Basic and acidic residues predominate over residues 1-12 (MADEINEIREEQ). The interval 1–85 (MADEINEIRE…LNNESVDAGE (85 aa)) is disordered. Alanine 2 carries the post-translational modification N-acetylalanine. Residues serine 42, serine 80, and serine 112 each carry the phosphoserine; by CK2 modification. The C4-type zinc-finger motif lies at 222–246 (CLGCKSPDTILSKENRLFFLRCEKC).

Belongs to the eIF-2-beta/eIF-5 family. Eukaryotic translation initiation factor 2 eIF2 is a heterotrimeric complex composed of an alpha, a beta and a gamma subunit. Phosphorylated at Ser-42, Ser-80 and Ser-112 by CK2.

It is found in the cytoplasm. The protein resides in the cytosol. Functionally, component of the eIF2 complex that functions in the early steps of protein synthesis by forming a ternary complex with GTP and initiator tRNA. This complex binds to a 40S ribosomal subunit, followed by mRNA binding to form a 43S pre-initiation complex (43S PIC). Junction of the 60S ribosomal subunit to form the 80S initiation complex is preceded by hydrolysis of the GTP bound to eIF2 and release of an eIF2-GDP binary complex. In order for eIF2 to recycle and catalyze another round of initiation, the GDP bound to eIF2 must exchange with GTP by way of a reaction catalyzed by eIF2B. The polypeptide is Eukaryotic translation initiation factor 2 subunit beta (Arabidopsis thaliana (Mouse-ear cress)).